Reading from the N-terminus, the 298-residue chain is 2-dehydro-3-deoxy-D-arabinonate dehydratase (298 aa).

Ile86 serves as a coordination point for substrate. Residues Glu148, Glu150, and Asp169 each contribute to the Mg(2+) site. The substrate site is built by Lys187 and Thr261.

It belongs to the FAH family. In terms of assembly, homotetramer. Mg(2+) is required as a cofactor. Requires Ca(2+) as cofactor.

It carries out the reaction 2-dehydro-3-deoxy-D-arabinonate = 2,5-dioxopentanoate + H2O. Functionally, participates in a pentose oxidation pathway that converts D-arabinonate to 2-oxoglutarate. The sequence is that of 2-dehydro-3-deoxy-D-arabinonate dehydratase from Saccharolobus solfataricus (strain ATCC 35092 / DSM 1617 / JCM 11322 / P2) (Sulfolobus solfataricus).